A 269-amino-acid polypeptide reads, in one-letter code: NAD-capped RNA hydrolase NudC (269 aa).

Arg-81 is a substrate binding site. Positions 110, 113, 128, and 131 each coordinate Zn(2+). Residue Tyr-136 participates in substrate binding. One can recognise a Nudix hydrolase domain in the interval 137–260 (PRIFPCIIVA…TIARALIEQT (124 aa)). A divalent metal cation contacts are provided by Ala-170, Glu-186, and Glu-190. The short motif at 171–192 (GFVEVGETLEQCVAREVLEETG) is the Nudix box element. Position 204 to 211 (204 to 211 (QPWAFPSS)) interacts with substrate. An a divalent metal cation-binding site is contributed by Glu-231. Substrate is bound at residue Ala-253.

Belongs to the Nudix hydrolase family. NudC subfamily. In terms of assembly, homodimer. Requires Mg(2+) as cofactor. Mn(2+) is required as a cofactor. The cofactor is Zn(2+).

It carries out the reaction a 5'-end NAD(+)-phospho-ribonucleoside in mRNA + H2O = a 5'-end phospho-adenosine-phospho-ribonucleoside in mRNA + beta-nicotinamide D-ribonucleotide + 2 H(+). The catalysed reaction is NAD(+) + H2O = beta-nicotinamide D-ribonucleotide + AMP + 2 H(+). It catalyses the reaction NADH + H2O = reduced beta-nicotinamide D-ribonucleotide + AMP + 2 H(+). In terms of biological role, mRNA decapping enzyme that specifically removes the nicotinamide adenine dinucleotide (NAD) cap from a subset of mRNAs by hydrolyzing the diphosphate linkage to produce nicotinamide mononucleotide (NMN) and 5' monophosphate mRNA. The NAD-cap is present at the 5'-end of some mRNAs and stabilizes RNA against 5'-processing. Has preference for mRNAs with a 5'-end purine. Catalyzes the hydrolysis of a broad range of dinucleotide pyrophosphates. This is NAD-capped RNA hydrolase NudC from Vibrio cholerae serotype O1 (strain ATCC 39315 / El Tor Inaba N16961).